Reading from the N-terminus, the 948-residue chain is Protein translocase subunit SecA (948 aa).

Residues glutamine 91, 109–113, and aspartate 509 contribute to the ATP site; that span reads GEGKT.

This sequence belongs to the SecA family. Monomer and homodimer. Part of the essential Sec protein translocation apparatus which comprises SecA, SecYEG and auxiliary proteins SecDF. Other proteins may also be involved.

Its subcellular location is the cell inner membrane. The protein resides in the cellular thylakoid membrane. The protein localises to the cytoplasm. The enzyme catalyses ATP + H2O + cellular proteinSide 1 = ADP + phosphate + cellular proteinSide 2.. In terms of biological role, part of the Sec protein translocase complex. Interacts with the SecYEG preprotein conducting channel. Has a central role in coupling the hydrolysis of ATP to the transfer of proteins into and across the cell membrane, serving as an ATP-driven molecular motor driving the stepwise translocation of polypeptide chains across the membrane. Probably participates in protein translocation into and across both the cytoplasmic and thylakoid membranes in cyanobacterial cells. In Synechococcus elongatus (strain ATCC 33912 / PCC 7942 / FACHB-805) (Anacystis nidulans R2), this protein is Protein translocase subunit SecA.